A 415-amino-acid chain; its full sequence is Nacrein-like protein F (415 aa).

Asn-27 is a glycosylation site (N-linked (GlcNAc...) asparagine). The Alpha-carbonic anhydrase domain occupies 33–414 (AGFSYDRSIC…KNKVTVYKSF (382 aa)). Zn(2+) contacts are provided by His-132, His-134, and His-157. A disordered region spans residues 201–297 (DEPDDEECKH…GENGHKHGCR (97 aa)). The span at 207–219 (ECKHILKGHHPDN) shows a compositional bias: basic and acidic residues. Positions 220–289 (NENGNGDNGN…NNGENGNNGE (70 aa)) are enriched in low complexity. 22 repeat units span residues 225-227 (GDN), 228-230 (GNN), 231-233 (GYN), 234-236 (GDN), 237-239 (GNN), 240-242 (GDN), 243-245 (GNN), 246-248 (GYN), 249-251 (GDN), 252-254 (GNN), 255-257 (GVN), 258-260 (GNN), 261-263 (GYN), 264-266 (GDN), 267-269 (GNN), 270-272 (GDN), 273-275 (GNN), 276-278 (GEN), 279-281 (GNN), 282-284 (GEN), 285-286 (GN), and 288-290 (GEN). Positions 225–290 (GDNGNNGYNG…NGENGNNGEN (66 aa)) are 22 X 3 AA approximate tandem repeats of G-X-N. 355-356 (TT) is a binding site for substrate.

The protein belongs to the alpha-carbonic anhydrase family. Homooligomer; disulfide-linked. May also be disulfide-linked to insoluble organic matrix. Requires Zn(2+) as cofactor. Expressed in the mantle.

Its subcellular location is the secreted. It localises to the extracellular space. The protein localises to the extracellular matrix. It carries out the reaction hydrogencarbonate + H(+) = CO2 + H2O. In terms of biological role, acts as a negative regulator for calcification in the shells of mollusks. May function both as a calcium concentrator and as a carbonic anhydrase required for production of carbonate ions, which are assembled to CaCO(3) at mineralization sites. Is important for shell formation in both the calcitic prismatic layer and the aragonitic nacreous layer. Shows inhibitory activity of crystal formation when present in free state but, when attached to the insoluble matrix, may regulate the form and size of aragonite crystal. This chain is Nacrein-like protein F, found in Pinctada fucata (Akoya pearl oyster).